We begin with the raw amino-acid sequence, 653 residues long: MKLNISELKCQQHDKLVTIYCCACDAYFCKKCDKEKHSQDDNQEDSLHIRGLVNKDVIIGRDEEDDDDEDDEYDNKIQDILKKSNNLKKSNSIGGNIVENIELKSPMKTDSPYFIRDKNSIQSDIDSKITEKIDLDNLIHEEDDPFTIGINSNNSNSNNLIDVNDLHTPSTPSPLPSPSLSRSSSTNIKPQQQTSPSPSRSSESNSTTNNNNNKNEKKKLKNSSNSELNRKKIYKKEKIIGDSDEEEHILNNGNKNKNNKSKSVYDYDDDDDNDDDNNNNNNNNNNNNNNNNNENDDNSNSKSEGGVFYSSSSETEKEIENVENKIDNKPKPPNKSLPKTPQSNKKKKPENSIMVKNLDSGLVEQIFEEEEEEEEDEDEVGSESGGGGTIFKNPYSNRKNKSGKYKSNSCALEEGEEDDSSIQSQFDGEEKEAVHIVQGIVEGAILFGTNIATGLSGIVAEPIINIVDNQDNKVKGFFKGVGKGLLGAVTSPVKGGSGFLIKTAEGLRNTPATVFHGDHEDLMGFSDADQVKEREASHIFEGIAQGTISLSKNLYLGVTGIVTEPIKGLREDENNKAKGFFKGVGKGLMGAIVKPASGIIEMAGKTAEGIANTPHTIINAIEMKIDEKSNNNNNNNNLDSDSEGETYVNPNEN.

A B box-type zinc finger spans residues 5 to 49; it reads ISELKCQQHDKLVTIYCCACDAYFCKKCDKEKHSQDDNQEDSLHI. Zn(2+) is bound by residues Cys-10, His-13, Cys-32, and His-37. Disordered regions lie at residues 159 to 232, 248 to 420, and 627 to 653; these read NLID…NRKK, HILN…EDDS, and EKSNNNNNNNNLDSDSEGETYVNPNEN. Residues 195–213 show a composition bias toward low complexity; it reads SPSPSRSSESNSTTNNNNN. Positions 266–277 are enriched in acidic residues; sequence DYDDDDDNDDDN. Positions 278-293 are enriched in low complexity; the sequence is NNNNNNNNNNNNNNNN. The span at 314 to 330 shows a compositional bias: basic and acidic residues; it reads ETEKEIENVENKIDNKP. Positions 366 to 381 are enriched in acidic residues; it reads IFEEEEEEEEDEDEVG.

This sequence belongs to the VPS13 family.

It localises to the membrane. In terms of biological role, mediates the transfer of lipids between membranes at organelle contact sites. This Dictyostelium discoideum (Social amoeba) protein is Intermembrane lipid transfer protein vps13l (vps13l).